We begin with the raw amino-acid sequence, 613 residues long: Leucine-rich repeat and immunoglobulin-like domain-containing nogo receptor-interacting protein 1 (613 aa).

An N-terminal signal peptide occupies residues 1–34; sequence MLAGEASMRSPILACWQPILLLMLGSILSGSATG. Cystine bridges form between Cys-35–Cys-41 and Cys-39–Cys-50. One can recognise an LRRNT domain in the interval 35–64; that stretch reads CPPRCECSAQERAVLCHRKRFMVVPEGIPT. Topologically, residues 35–554 are extracellular; that stretch reads CPPRCECSAQ…FDIKTLIIAT (520 aa). 11 LRR repeats span residues 65–86, 89–110, 113–134, 137–158, 161–182, 185–206, 209–230, 257–278, 281–302, 305–326, and 329–350; these read ETRQLDLGKNRIKTLNQDEFAN, HLEELELNENIISAIEPGAFNN, NLRTLGLRSNRLKLIPLGVFTG, NLTKLDISENKIVILLDYMFQD, NLKSLEVGDNDLVYISHRAFSG, SLEQLTLEKCNLTSIPTEALSH, GLIVLRLRHLNINAIRDYSFKR, NLTSLSITHCNLTSIPYVSVRH, YLRFLNLSYNPIVTIEGSMLHD, RLQEIQLVGGQLTTVEPFAFRG, and YLRILNVSGNLLTTLEESAFHS. Asn-137 carries an N-linked (GlcNAc...) asparagine glycan. Asn-195 carries an N-linked (GlcNAc...) asparagine glycan. N-linked (GlcNAc...) asparagine glycosylation is found at Asn-257, Asn-267, and Asn-286. A glycan (N-linked (GlcNAc...) asparagine) is linked at Asn-334. One can recognise an LRRCT domain in the interval 362–416; that stretch reads NPLACDCRLLWVFRRRWRLNFNKQQPTCSTPEFVQGKEFKDFPDVLLPNYFTCRR. Disulfide bonds link Cys-366–Cys-389, Cys-368–Cys-414, and Cys-439–Cys-490. In terms of domain architecture, Ig-like C2-type spans 404–508; that stretch reads PDVLLPNYFT…DTMLAHLHVR (105 aa). 5 N-linked (GlcNAc...) asparagine glycosylation sites follow: Asn-485, Asn-498, Asn-519, Asn-530, and Asn-535. Residues 555–575 traverse the membrane as a helical segment; the sequence is TMGFISFLGVVLFCLVLLFLW. Residues 576–613 lie on the Cytoplasmic side of the membrane; it reads SRGKGNTKHNIEIEYVPRKSDAGISSADAPRKFNMKMI.

As to quaternary structure, homotetramer. Forms ternary complex with RTN4R/NGFR and RTN4R/TNFRSF19. N-glycosylated. Contains predominantly high-mannose glycans.

The protein resides in the cell membrane. Functional component of the Nogo receptor signaling complex (RTN4R/NGFR) in RhoA activation responsible for some inhibition of axonal regeneration by myelin-associated factors. Is also an important negative regulator of oligodentrocyte differentiation and axonal myelination. This Gallus gallus (Chicken) protein is Leucine-rich repeat and immunoglobulin-like domain-containing nogo receptor-interacting protein 1 (LINGO1).